The chain runs to 70 residues: Protein SlyX homolog (70 aa).

The protein belongs to the SlyX family.

The chain is Protein SlyX homolog from Shewanella denitrificans (strain OS217 / ATCC BAA-1090 / DSM 15013).